Here is a 216-residue protein sequence, read N- to C-terminus: Penicillin-binding protein activator LpoB (216 aa).

The first 20 residues, 1–20 (MIKNLSRYALVTAFALFLSG), serve as a signal peptide directing secretion. A lipid anchor (N-palmitoyl cysteine) is attached at Cys21. Residue Cys21 is the site of S-diacylglycerol cysteine attachment. A disordered region spans residues 28-77 (QPAPVDEAKPGTEQPAQPTQPVPTVPSVPTVPAQPGPIEHPDQTSQPAPR).

The protein belongs to the LpoB family. In terms of assembly, interacts with PBP1b.

The protein localises to the cell outer membrane. Functionally, regulator of peptidoglycan synthesis that is essential for the function of penicillin-binding protein 1B (PBP1b). This chain is Penicillin-binding protein activator LpoB, found in Enterobacter sp. (strain 638).